Here is a 263-residue protein sequence, read N- to C-terminus: HTH-type transcriptional repressor NanR (263 aa).

Residues 30 to 98 form the HTH gntR-type domain; that stretch reads KKLSEMVEEE…NGERARVSRP (69 aa). Positions 58-77 form a DNA-binding region, H-T-H motif; it reads ERELMAFFNVGRPSVREALA.

It belongs to the NanR family.

Transcriptional repressor that controls expression of the genes required for the catabolism of sialic acids. The protein is HTH-type transcriptional repressor NanR of Salmonella bongori (strain ATCC 43975 / DSM 13772 / NCTC 12419).